The sequence spans 305 residues: Probable lipid kinase YegS-like (305 aa).

Residues 1-129 (MSERKALLIL…IDLGEVGGQI (129 aa)) enclose the DAGKc domain. Residues Thr39, 65-71 (GDGTLRD), and Thr92 each bind ATP. Positions 210, 213, and 215 each coordinate Mg(2+). The active-site Proton acceptor is the Glu268.

It belongs to the diacylglycerol/lipid kinase family. YegS lipid kinase subfamily. Mg(2+) is required as a cofactor. Ca(2+) serves as cofactor.

Its subcellular location is the cytoplasm. Functionally, probably phosphorylates lipids; the in vivo substrate is unknown. This is Probable lipid kinase YegS-like from Pseudomonas fluorescens (strain Pf0-1).